Reading from the N-terminus, the 334-residue chain is N-acetyl-gamma-glutamyl-phosphate reductase (334 aa).

The active site involves cysteine 154.

Belongs to the NAGSA dehydrogenase family. Type 1 subfamily.

It is found in the cytoplasm. It carries out the reaction N-acetyl-L-glutamate 5-semialdehyde + phosphate + NADP(+) = N-acetyl-L-glutamyl 5-phosphate + NADPH + H(+). Its pathway is amino-acid biosynthesis; L-arginine biosynthesis; N(2)-acetyl-L-ornithine from L-glutamate: step 3/4. Functionally, catalyzes the NADPH-dependent reduction of N-acetyl-5-glutamyl phosphate to yield N-acetyl-L-glutamate 5-semialdehyde. The chain is N-acetyl-gamma-glutamyl-phosphate reductase from Photorhabdus laumondii subsp. laumondii (strain DSM 15139 / CIP 105565 / TT01) (Photorhabdus luminescens subsp. laumondii).